A 243-amino-acid polypeptide reads, in one-letter code: Triosephosphate isomerase (243 aa).

A substrate-binding site is contributed by 9 to 11; that stretch reads NWK. His-96 (electrophile) is an active-site residue. Glu-165 acts as the Proton acceptor in catalysis. Substrate contacts are provided by residues Gly-171, Ser-204, and 225-226; that span reads GG.

It belongs to the triosephosphate isomerase family. In terms of assembly, homodimer.

Its subcellular location is the cytoplasm. It catalyses the reaction D-glyceraldehyde 3-phosphate = dihydroxyacetone phosphate. It participates in carbohydrate biosynthesis; gluconeogenesis. Its pathway is carbohydrate degradation; glycolysis; D-glyceraldehyde 3-phosphate from glycerone phosphate: step 1/1. Involved in the gluconeogenesis. Catalyzes stereospecifically the conversion of dihydroxyacetone phosphate (DHAP) to D-glyceraldehyde-3-phosphate (G3P). The protein is Triosephosphate isomerase of Synechococcus sp. (strain WH7803).